Here is a 1180-residue protein sequence, read N- to C-terminus: Neurexin like receptor 1 (1180 aa).

An N-terminal signal peptide occupies residues 1-20; that stretch reads MSGLCLVLLLSIFAVSQSSG. Over 21–1108 the chain is Extracellular; that stretch reads ECSDVSFSSV…SQNKQDLVSK (1088 aa). A Laminin G-like 1 domain is found at 124–290; it reads PITAFDDSSY…LSPNEVHNQC (167 aa). N-linked (GlcNAc...) asparagine glycosylation is present at N229. A disulfide bridge links C267 with C290. N302, N336, N355, and N436 each carry an N-linked (GlcNAc...) asparagine glycan. The EGF-like 1 domain maps to 444–481; it reads FQEKCLPNPCENGGGCVQSALDDYVCNCKEGYKGKNCH. Cystine bridges form between C448–C459, C453–C469, and C471–C480. N-linked (GlcNAc...) asparagine glycosylation is found at N522 and N636. Residues 695–863 form the Laminin G-like 2 domain; that stretch reads TFDPVTFSNR…GVAIGDDGYC (169 aa). An EGF-like 2 domain is found at 859 to 896; it reads DDGYCRPDLCQNGGQCVDKYDGYVCDCSMTPFGGSDCT. Cystine bridges form between C863/C874, C868/C883, and C885/C895. 6 N-linked (GlcNAc...) asparagine glycosylation sites follow: N933, N949, N978, N997, N1011, and N1052. The chain crosses the membrane as a helical span at residues 1109 to 1129; that stretch reads AIIGGGILALSLFILCMSSLI. Topologically, residues 1130 to 1180 are cytoplasmic; sequence CYMRSRPEGVYKTNETGENCSPSRSEEPLVHNTTSNNNNNPTYASNKEYFC. The segment covering 1142–1152 has biased composition (polar residues); it reads TNETGENCSPS. A disordered region spans residues 1142 to 1180; the sequence is TNETGENCSPSRSEEPLVHNTTSNNNNNPTYASNKEYFC. Low complexity predominate over residues 1161–1171; the sequence is NTTSNNNNNPT.

It belongs to the neurexin family. Interacts (via the intracellular domain) with F-actin; the interaction is required for anchoring F-actin at the membrane for gap junction formation. As to expression, highly expressed in pharyngeal g1 and g2 gland cells, pharyngeal muscle cells and the unilateral GABAergic RIS interneuron (at protein level). Expressed in pm5 pharyngeal muscle cells and the nerve ring.

Its subcellular location is the cell membrane. The protein resides in the cell junction. It localises to the gap junction. In terms of biological role, required for gap junction formation, playing a role in anchoring the cytoskeletal component F-actin to the membrane of adjacent cells and thus facilitating the formation of gap junction channels in embryonic cells, muscle cells and neuronal cells. Plays a role in maintaining gap junction activity to promote pharyngeal muscle contraction. The sequence is that of Neurexin like receptor 1 from Caenorhabditis elegans.